Here is a 340-residue protein sequence, read N- to C-terminus: Small ribosomal subunit biogenesis GTPase RsgA (340 aa).

Basic and acidic residues predominate over residues 20–34; the sequence is ERAERAERRARRDDT. The segment at 20 to 42 is disordered; sequence ERAERAERRARRDDTSLDAGDYG. The CP-type G domain occupies 116 to 274; that stretch reads RGQLKPVAAN…LIDSPGIREF (159 aa). GTP is bound by residues 163–166 and 216–224; these read NKTD and GQSGVGKSS. Residues C298, C303, H305, and C311 each coordinate Zn(2+).

The protein belongs to the TRAFAC class YlqF/YawG GTPase family. RsgA subfamily. Monomer. Associates with 30S ribosomal subunit, binds 16S rRNA. Requires Zn(2+) as cofactor.

Its subcellular location is the cytoplasm. One of several proteins that assist in the late maturation steps of the functional core of the 30S ribosomal subunit. Helps release RbfA from mature subunits. May play a role in the assembly of ribosomal proteins into the subunit. Circularly permuted GTPase that catalyzes slow GTP hydrolysis, GTPase activity is stimulated by the 30S ribosomal subunit. This Chromohalobacter salexigens (strain ATCC BAA-138 / DSM 3043 / CIP 106854 / NCIMB 13768 / 1H11) protein is Small ribosomal subunit biogenesis GTPase RsgA.